The chain runs to 392 residues: DNA replication and repair protein RecF (392 aa).

30-37 (GRNGFGKT) is an ATP binding site.

This sequence belongs to the RecF family.

Its subcellular location is the cytoplasm. In terms of biological role, the RecF protein is involved in DNA metabolism; it is required for DNA replication and normal SOS inducibility. RecF binds preferentially to single-stranded, linear DNA. It also seems to bind ATP. This is DNA replication and repair protein RecF from Corynebacterium aurimucosum (strain ATCC 700975 / DSM 44827 / CIP 107346 / CN-1) (Corynebacterium nigricans).